We begin with the raw amino-acid sequence, 762 residues long: MLPFRNYGETIDEYEVQHLLGKGGFACVYKAKCLRTQQNVAIKMIDKKLIQGSGLSSRVRQEVEIHSRLKHPSVLQLHTFFQDGNYVYLVLELADNGELHRYMNQQMKRPFTEQEASSILRQVVDGLLYLHSHNIMHRDISLSNLLLSRDMHVKIADFGLATQLKRPDERHMTMCGTPNYISPEVVSHMSHGLPADLWSVGCMLYTLLVGRPPFDTDAVQSTLNKVVLSDYTMPSHLSYEARDLIEKLLRKNPHERISLEQVLRHPFMVKAGGGSIISYTTTPGASDGYGQSIASGDSGIVTFASNDSKNSQRHMLPQIQEEFGYYQEQRKNYAPHPVYRQSSAEPLNSTEMEWQRIGQSNGHFLAHSTPATGGQVAAKKNNAECISMPPLNTLRLQPTRYKTKNAIMSIMANGEVVIEFIKCKSKMNEDRIVDICRISGDGRRIIIYQPDPGRGLPIRDQPSAVQPENYAYNYDNLPSKHWKKYVYAARFVSLVKSKTPKVTYFSGLAKCHLMENMADFEMCYYSGAKLTKSPTDAVKLYNKHGLLITDQTSGEAMRWIEHSNECFAHCLSICNALELAQTGSNTCFPVTIGRRPTPEVMPSQQRADGLRDTTNFAYSTPKSQQGSINFSISTISSMRSGNDLIGSQLLAAQQNVPIKRLNVPGVGTATELSHGIVQVQFYDGSVISIIPETQGGGITYTQSSGLSTHFPDHDDLPIAVRDRLSQLPQVQMKLKSAPLIGSKKFDCKTTTESAPWHNRMLI.

Positions 14 to 268 constitute a Protein kinase domain; the sequence is YEVQHLLGKG…LEQVLRHPFM (255 aa). Residues 20–28 and K43 each bind ATP; that span reads LGKGGFACV. D139 functions as the Proton acceptor in the catalytic mechanism. A Cryptic POLO box 1 (CPB1) domain is found at 383–498; that stretch reads AECISMPPLN…ARFVSLVKSK (116 aa). Positions 499–602 constitute a Cryptic POLO box 2 (CPB2) domain; that stretch reads TPKVTYFSGL…GRRPTPEVMP (104 aa). The region spanning 657-736 is the POLO box domain; that stretch reads PIKRLNVPGV…LPQVQMKLKS (80 aa).

Belongs to the protein kinase superfamily. Ser/Thr protein kinase family. CDC5/Polo subfamily. As to quaternary structure, homodimer. Ubiquitinated by the SCF(Slimb) ubiquitin ligase complex; leading to its degradation by the proteasome during interphase and regulating centriole number and ensuring the block to centriole reduplication.

The protein localises to the cytoplasm. It localises to the cytoskeleton. Its subcellular location is the microtubule organizing center. The protein resides in the centrosome. It is found in the centriole. The catalysed reaction is L-seryl-[protein] + ATP = O-phospho-L-seryl-[protein] + ADP + H(+). The enzyme catalyses L-threonyl-[protein] + ATP = O-phospho-L-threonyl-[protein] + ADP + H(+). Serine/threonine-protein kinase that plays a central role in centriole duplication. Able to trigger procentriole formation on the surface of the mother centriole cylinder, using mother centriole as a platform, leading to the recruitment of centriole biogenesis proteins such as sas-6. When overexpressed, it is able to induce centrosome amplification through the simultaneous generation of multiple procentrioles adjoining each parental centriole during S phase. Centrosome amplification following overexpression can initiate tumorigenesis, highlighting the importance of centrosome regulation in cancers. This Drosophila grimshawi (Hawaiian fruit fly) protein is Serine/threonine-protein kinase PLK4 (SAK).